The following is a 249-amino-acid chain: Green-light absorbing proteorhodopsin (249 aa).

The first 17 residues, 1–17, serve as a signal peptide directing secretion; the sequence is MKLLLILGSVIALPTFA. A run of 7 helical transmembrane segments spans residues 30–49, 62–84, 99–121, 128–147, 151–168, 189–211, and 221–243; these read GVSF…FFFV, LTVS…GVWI, LLTV…NVAG, LVGS…GIMA, AFII…ELWA, MMYI…YLMG, and LIYN…NVAV. An N6-(retinylidene)lysine modification is found at Lys-231.

It belongs to the archaeal/bacterial/fungal opsin family. Contains one covalently linked retinal chromophore.

It is found in the cell membrane. Functionally, light-driven proton pump that generates photothrophic energy. In Gamma-proteobacterium EBAC31A08, this protein is Green-light absorbing proteorhodopsin.